Consider the following 46-residue polypeptide: Bottromycin D (46 aa).

Positions 10-46 (MTADFLNDDPNNAELSSLEMEELESWGAWSDDTDQSV) are excised as a propeptide.

The precursor peptide is first ribosomally synthesized and then highly tailored by specific enzymes to yield the final natural product. These modifications include several methylations, cyclization and the formation of t-Leu and Thia-beta-Ala residues.

The protein localises to the secreted. Functionally, bottromycin D is a ribosomally synthesized and post-translationally modified peptide (RiPP) that displays antibiotic activity against methicillin-resistant S.aureus (MRSA). This chain is Bottromycin D, found in Streptomyces sp.